We begin with the raw amino-acid sequence, 372 residues long: DNA-directed RNA polymerase subunit alpha (372 aa).

The segment at 1–268 (MIFDEDSNSV…DQFQPFINFD (268 aa)) is alpha N-terminal domain (alpha-NTD). The alpha C-terminal domain (alpha-CTD) stretch occupies residues 280–372 (KDALPYDSNL…ESLSKQYSEE (93 aa)).

This sequence belongs to the RNA polymerase alpha chain family. In terms of assembly, homodimer. The RNAP catalytic core consists of 2 alpha, 1 beta, 1 beta' and 1 omega subunit. When a sigma factor is associated with the core the holoenzyme is formed, which can initiate transcription.

It catalyses the reaction RNA(n) + a ribonucleoside 5'-triphosphate = RNA(n+1) + diphosphate. In terms of biological role, DNA-dependent RNA polymerase catalyzes the transcription of DNA into RNA using the four ribonucleoside triphosphates as substrates. This is DNA-directed RNA polymerase subunit alpha from Ehrlichia canis (strain Jake).